A 154-amino-acid chain; its full sequence is Ribonuclease H (154 aa).

The region spanning 1 to 141 (MKRIEAYTDG…ADELAREGME (141 aa)) is the RNase H type-1 domain. Positions 9, 47, 69, and 133 each coordinate Mg(2+).

The protein belongs to the RNase H family. As to quaternary structure, monomer. The cofactor is Mg(2+).

Its subcellular location is the cytoplasm. The catalysed reaction is Endonucleolytic cleavage to 5'-phosphomonoester.. Endonuclease that specifically degrades the RNA of RNA-DNA hybrids. This chain is Ribonuclease H, found in Brucella anthropi (strain ATCC 49188 / DSM 6882 / CCUG 24695 / JCM 21032 / LMG 3331 / NBRC 15819 / NCTC 12168 / Alc 37) (Ochrobactrum anthropi).